The sequence spans 209 residues: Ribonuclease HII (209 aa).

The RNase H type-2 domain maps to 7-198; it reads GPVAGVDEAG…VAKAHQEWLH (192 aa). A divalent metal cation is bound by residues Asp13, Glu14, and Asp107.

This sequence belongs to the RNase HII family. It depends on Mn(2+) as a cofactor. Mg(2+) is required as a cofactor.

It localises to the cytoplasm. It carries out the reaction Endonucleolytic cleavage to 5'-phosphomonoester.. Functionally, endonuclease that specifically degrades the RNA of RNA-DNA hybrids. The sequence is that of Ribonuclease HII from Corynebacterium glutamicum (strain R).